The following is a 95-amino-acid chain: Aspartyl/glutamyl-tRNA(Asn/Gln) amidotransferase subunit C (95 aa).

It belongs to the GatC family. In terms of assembly, heterotrimer of A, B and C subunits.

It catalyses the reaction L-glutamyl-tRNA(Gln) + L-glutamine + ATP + H2O = L-glutaminyl-tRNA(Gln) + L-glutamate + ADP + phosphate + H(+). The enzyme catalyses L-aspartyl-tRNA(Asn) + L-glutamine + ATP + H2O = L-asparaginyl-tRNA(Asn) + L-glutamate + ADP + phosphate + 2 H(+). Functionally, allows the formation of correctly charged Asn-tRNA(Asn) or Gln-tRNA(Gln) through the transamidation of misacylated Asp-tRNA(Asn) or Glu-tRNA(Gln) in organisms which lack either or both of asparaginyl-tRNA or glutaminyl-tRNA synthetases. The reaction takes place in the presence of glutamine and ATP through an activated phospho-Asp-tRNA(Asn) or phospho-Glu-tRNA(Gln). The sequence is that of Aspartyl/glutamyl-tRNA(Asn/Gln) amidotransferase subunit C from Rhodospirillum centenum (strain ATCC 51521 / SW).